We begin with the raw amino-acid sequence, 210 residues long: DNA replication complex GINS protein PSF3 (210 aa).

The protein belongs to the GINS3/PSF3 family. As to quaternary structure, component of the GINS complex which is a heterotetramer of gins1/psf1, gins2/psf2, gins3/psf3 and gins4/sld5. Component of the CMG helicase complex, composed of the mcm2-7 complex, the GINS complex and cdc45.

The protein resides in the nucleus. It is found in the chromosome. In terms of biological role, required for correct functioning of the GINS complex, a complex that plays an essential role in the initiation of DNA replication, and progression of DNA replication forks. GINS complex is a core component of CDC45-MCM-GINS (CMG) helicase, the molecular machine that unwinds template DNA during replication, and around which the replisome is built. The sequence is that of DNA replication complex GINS protein PSF3 from Xenopus laevis (African clawed frog).